Here is a 393-residue protein sequence, read N- to C-terminus: Phosphoglycerate kinase (393 aa).

Substrate is bound by residues 22-24 (DFN), Arg37, 60-63 (HLGR), Arg119, and Arg152. ATP is bound by residues Lys202, Gly293, Glu324, and 350-353 (GGDS).

It belongs to the phosphoglycerate kinase family. As to quaternary structure, monomer.

It is found in the cytoplasm. It catalyses the reaction (2R)-3-phosphoglycerate + ATP = (2R)-3-phospho-glyceroyl phosphate + ADP. Its pathway is carbohydrate degradation; glycolysis; pyruvate from D-glyceraldehyde 3-phosphate: step 2/5. In Borreliella burgdorferi (strain ATCC 35210 / DSM 4680 / CIP 102532 / B31) (Borrelia burgdorferi), this protein is Phosphoglycerate kinase (pgk).